A 399-amino-acid chain; its full sequence is Syndecan (399 aa).

Residues Met1–Ala28 form the signal peptide. A disordered region spans residues Ala28–Gly319. Topologically, residues Gln29 to Ile340 are extracellular. Low complexity predominate over residues Pro36 to Ser46. O-linked (Xyl...) (glycosaminoglycan) serine glycosylation occurs at Ser62. The span at Gly67–Asp77 shows a compositional bias: basic and acidic residues. 3 O-linked (Xyl...) (glycosaminoglycan) serine glycosylation sites follow: Ser79, Ser81, and Ser110. Residues Ser99–His116 are compositionally biased toward polar residues. Positions Thr117–Thr172 are enriched in low complexity. Asn160 carries N-linked (GlcNAc...) asparagine glycosylation. Residues Thr191–Asp214 are compositionally biased toward acidic residues. Ser194 is a glycosylation site (O-linked (Xyl...) (glycosaminoglycan) serine). The segment covering Tyr215 to Asp226 has biased composition (basic and acidic residues). A compositionally biased stretch (acidic residues) spans Asp253–Ile270. A compositionally biased stretch (polar residues) spans Pro299–Asp309. A helical membrane pass occupies residues Leu341–Arg365. Residues Met366–Ala399 lie on the Cytoplasmic side of the membrane. The tract at residues Ser373–Ala399 is disordered. Residues Pro383–Ala399 show a composition bias toward polar residues.

The protein belongs to the syndecan proteoglycan family. In terms of tissue distribution, in 13-16 hours embryos, expressed in lymph glands, peripheral and central nervous system and basal surfaces of gut epithelia. Sdc and robo are coexpressed in domains adjacent to slit; in tracheal pits and midline glia cells.

It is found in the membrane. Cell surface proteoglycan that bears heparan sulfate. Required for axonal and myotube guidance, is a necessary component of slit/robo signaling and is required in the slit target cells. The chain is Syndecan (Sdc) from Drosophila melanogaster (Fruit fly).